Consider the following 353-residue polypeptide: Mannonate dehydratase (353 aa).

This sequence belongs to the mannonate dehydratase family. Requires Fe(2+) as cofactor. It depends on Mn(2+) as a cofactor.

It carries out the reaction D-mannonate = 2-dehydro-3-deoxy-D-gluconate + H2O. It functions in the pathway carbohydrate metabolism; pentose and glucuronate interconversion. In terms of biological role, catalyzes the dehydration of D-mannonate. This chain is Mannonate dehydratase, found in Burkholderia cenocepacia (strain ATCC BAA-245 / DSM 16553 / LMG 16656 / NCTC 13227 / J2315 / CF5610) (Burkholderia cepacia (strain J2315)).